The primary structure comprises 346 residues: Holliday junction branch migration complex subunit RuvB (346 aa).

The tract at residues 4–185 (SDRIITASPF…FGIVSRLEFY (182 aa)) is large ATPase domain (RuvB-L). ATP is bound by residues L24, R25, G66, K69, T70, T71, 132-134 (EDY), R175, Y185, and R222. T70 is a Mg(2+) binding site. The segment at 186–256 (TADELGKIVT…VADAALQMLD (71 aa)) is small ATPAse domain (RuvB-S). Residues 259–346 (ATGLDVLDRK…TTVPSLFDPD (88 aa)) are head domain (RuvB-H). Residues R295, R314, and R319 each coordinate DNA.

Belongs to the RuvB family. As to quaternary structure, homohexamer. Forms an RuvA(8)-RuvB(12)-Holliday junction (HJ) complex. HJ DNA is sandwiched between 2 RuvA tetramers; dsDNA enters through RuvA and exits via RuvB. An RuvB hexamer assembles on each DNA strand where it exits the tetramer. Each RuvB hexamer is contacted by two RuvA subunits (via domain III) on 2 adjacent RuvB subunits; this complex drives branch migration. In the full resolvosome a probable DNA-RuvA(4)-RuvB(12)-RuvC(2) complex forms which resolves the HJ.

It localises to the cytoplasm. The catalysed reaction is ATP + H2O = ADP + phosphate + H(+). In terms of biological role, the RuvA-RuvB-RuvC complex processes Holliday junction (HJ) DNA during genetic recombination and DNA repair, while the RuvA-RuvB complex plays an important role in the rescue of blocked DNA replication forks via replication fork reversal (RFR). RuvA specifically binds to HJ cruciform DNA, conferring on it an open structure. The RuvB hexamer acts as an ATP-dependent pump, pulling dsDNA into and through the RuvAB complex. RuvB forms 2 homohexamers on either side of HJ DNA bound by 1 or 2 RuvA tetramers; 4 subunits per hexamer contact DNA at a time. Coordinated motions by a converter formed by DNA-disengaged RuvB subunits stimulates ATP hydrolysis and nucleotide exchange. Immobilization of the converter enables RuvB to convert the ATP-contained energy into a lever motion, pulling 2 nucleotides of DNA out of the RuvA tetramer per ATP hydrolyzed, thus driving DNA branch migration. The RuvB motors rotate together with the DNA substrate, which together with the progressing nucleotide cycle form the mechanistic basis for DNA recombination by continuous HJ branch migration. Branch migration allows RuvC to scan DNA until it finds its consensus sequence, where it cleaves and resolves cruciform DNA. In Nitrosomonas europaea (strain ATCC 19718 / CIP 103999 / KCTC 2705 / NBRC 14298), this protein is Holliday junction branch migration complex subunit RuvB.